The sequence spans 150 residues: Viral late gene transcription factor 2 (150 aa).

It belongs to the chordopoxvirinae VLTF-2 family. In terms of assembly, interacts with itself. Interacts with the late transcription factors VLTF-1.

Functionally, acts with RNA polymerase to initiate transcription from late gene promoters. The polypeptide is Viral late gene transcription factor 2 (VLTF2) (Homo sapiens (Human)).